A 404-amino-acid chain; its full sequence is ATP phosphoribosyltransferase regulatory subunit (404 aa).

This sequence belongs to the class-II aminoacyl-tRNA synthetase family. HisZ subfamily. As to quaternary structure, heteromultimer composed of HisG and HisZ subunits.

It is found in the cytoplasm. It functions in the pathway amino-acid biosynthesis; L-histidine biosynthesis; L-histidine from 5-phospho-alpha-D-ribose 1-diphosphate: step 1/9. In terms of biological role, required for the first step of histidine biosynthesis. May allow the feedback regulation of ATP phosphoribosyltransferase activity by histidine. In Picosynechococcus sp. (strain ATCC 27264 / PCC 7002 / PR-6) (Agmenellum quadruplicatum), this protein is ATP phosphoribosyltransferase regulatory subunit.